The chain runs to 421 residues: Cyclin-A2 (421 aa).

Position 1 is an N-acetylmethionine (M1). Residues 1 to 60 (MPGSSRQSGREAGSALLSLQQEDQENVNPEKAAPDQRARAALKTGNARGNAPQQRLKARR) are disordered. S5 is subject to Phosphoserine.

This sequence belongs to the cyclin family. Cyclin AB subfamily. As to quaternary structure, interacts with the CDK1 and CDK2 protein kinases to form serine/threonine kinase holoenzyme complexes. Interacts with CDK1 (hyperphosphorylated form in G1 and underphosphorylated forms in S and G2). Interacts with CDK2; the interaction increases from G1 to G2. Interacts (associated with CDK2 but not with CDK1) with SCAPER; regulates the activity of CCNA2/CDK2 by transiently maintaining CCNA2 in the cytoplasm. Forms a ternary complex with CDK2 and CDKN1B; CDKN1B inhibits the kinase activity of CDK2 through conformational rearrangements. Interacts with INCA1. In terms of processing, polyubiquitinated via 'Lys-11'-linked ubiquitin by the anaphase-promoting complex (APC/C), leading to its degradation by the proteasome. Deubiquitinated and stabilized by USP37 enables entry into S phase. Ubiquitinated during the G1 phase by the SCF(FBXO31) complex, leading to its proteasomal degradation.

It is found in the nucleus. It localises to the cytoplasm. Its function is as follows. Cyclin which controls both the G1/S and the G2/M transition phases of the cell cycle. Functions through the formation of specific serine/threonine kinase holoenzyme complexes with the cyclin-dependent protein kinases CDK1 and CDK2. The cyclin subunit confers the substrate specificity of these complexes and differentially interacts with and activates CDK1 and CDK2 throughout the cell cycle. This chain is Cyclin-A2, found in Mesocricetus auratus (Golden hamster).